A 1650-amino-acid polypeptide reads, in one-letter code: HEAT repeat-containing protein 1 homolog (1650 aa).

The tract at residues 1183-1210 (QYDSAASPGSSVAGGRGNRGHRIRQQSL) is disordered. The HEAT repeat unit spans residues 1609 to 1645 (LLPFLNELIEDENKQVEAQCQKVINSLQHKFGETFWS).

The protein belongs to the HEATR1/UTP10 family.

Its subcellular location is the nucleus. It localises to the nucleolus. Involved in nucleolar processing of pre-18S ribosomal RNA. Involved in ribosome biosynthesis. The protein is HEAT repeat-containing protein 1 homolog (toe-1) of Caenorhabditis elegans.